We begin with the raw amino-acid sequence, 358 residues long: Homoserine O-acetyltransferase (358 aa).

Residues 52 to 337 (NVILICHALT…DEPYGHDAFL (286 aa)) form the AB hydrolase-1 domain. The Nucleophile role is filled by Ser148. Arg217 lines the substrate pocket. Residues Asp304 and His333 contribute to the active site. Residue Asp334 coordinates substrate.

Belongs to the AB hydrolase superfamily. MetX family. Homodimer.

It is found in the cytoplasm. The catalysed reaction is L-homoserine + acetyl-CoA = O-acetyl-L-homoserine + CoA. It participates in amino-acid biosynthesis; L-methionine biosynthesis via de novo pathway; O-acetyl-L-homoserine from L-homoserine: step 1/1. Functionally, transfers an acetyl group from acetyl-CoA to L-homoserine, forming acetyl-L-homoserine. The sequence is that of Homoserine O-acetyltransferase from Chlorobium luteolum (strain DSM 273 / BCRC 81028 / 2530) (Pelodictyon luteolum).